The sequence spans 145 residues: Actin-depolymerizing factor 2 (145 aa).

The ADF-H domain occupies 13-145 (GMGVAPDIRD…DLEVLRERAH (133 aa)).

This sequence belongs to the actin-binding proteins ADF family.

Actin-depolymerizing protein. Severs actin filaments (F-actin) and binds to actin monomers. This Oryza sativa subsp. japonica (Rice) protein is Actin-depolymerizing factor 2 (ADF2).